The primary structure comprises 871 residues: Rho guanine nucleotide exchange factor 26 (871 aa).

Disordered regions lie at residues 1–49, 86–233, and 288–310; these read MDGE…LLIT, AQRR…NPSV, and PLGHAGEESEVDNDVDSPGSLRR. Residue S22 is modified to Phosphoserine. A compositionally biased stretch (pro residues) spans 136-156; sequence PAPPPPPVLRPPRTPNAPAPC. The segment covering 173 to 192 has biased composition (polar residues); it reads PTANGLAANNDSPGSGSQSG. Position 392 is a phosphoserine (S392). Residues 439 to 623 form the DH domain; that stretch reads KRQEAIFEVI…SKLVRLCNEG (185 aa). Positions 655-782 constitute a PH domain; sequence WLVKRGELTA…WITALGHSSG (128 aa). Residues 789 to 850 enclose the SH3 domain; the sequence is TSLTQVEIVR…PMECAKEITC (62 aa).

Interacts with ICAM1 and RHOG. Isoform 1 is broadly expressed, with highest levels in liver (at protein level). Certain mRNA species appear to be specifically expressed in prostate and liver.

Its subcellular location is the cell projection. The protein localises to the ruffle. Functionally, activates RhoG GTPase by promoting the exchange of GDP by GTP. Required for the formation of membrane ruffles during macropinocytosis. Required for the formation of cup-like structures during trans-endothelial migration of leukocytes. In case of Salmonella enterica infection, activated by SopB, which induces cytoskeleton rearrangements and promotes bacterial entry. The polypeptide is Rho guanine nucleotide exchange factor 26 (ARHGEF26) (Homo sapiens (Human)).